The sequence spans 659 residues: Zeaxanthin epoxidase, chloroplastic (659 aa).

A chloroplast-targeting transit peptide spans 1–50 (MALLSATAPAKTRFSLFSHEEAQHPHPHALSACCGGGASGKRQRARARVA). Residues 79–107 (RVLV…TVFE) and 357–370 (TFNW…LLGD) contribute to the FAD site. The region spanning 553-607 (LSIGSRSDPSNSTASLALPLPQISENHATITCKNKAFYVTDNGSEHGTWITDNEG) is the FHA domain.

FAD serves as cofactor. Expressed in young microspores.

The protein resides in the plastid. It localises to the chloroplast membrane. It is found in the chloroplast thylakoid membrane. It catalyses the reaction all-trans-zeaxanthin + 4 reduced [2Fe-2S]-[ferredoxin] + 2 O2 + 4 H(+) = all-trans-violaxanthin + 4 oxidized [2Fe-2S]-[ferredoxin] + 2 H2O. Its pathway is plant hormone biosynthesis; abscisate biosynthesis. Its function is as follows. Zeaxanthin epoxidase that plays an important role in the xanthophyll cycle and abscisic acid (ABA) biosynthesis. Converts zeaxanthin into antheraxanthin and subsequently violaxanthin. Required for resistance to osmotic and drought stresses, seed development and dormancy. The chain is Zeaxanthin epoxidase, chloroplastic (ZEP) from Oryza sativa subsp. japonica (Rice).